The primary structure comprises 235 residues: Golgi to ER traffic protein 1 (235 aa).

Residue methionine 1 is a topological domain, lumenal. The helical transmembrane segment at 2–21 (HWAAAVAIFFIVVTKFLQYT) threads the bilayer. Over 22–104 (NKYHEKWISK…AFQAHLHKLR (83 aa)) the chain is Cytoplasmic. The stretch at 68 to 104 (WTKNNRKLDSLDKEINNLKDEIQSENKAFQAHLHKLR) forms a coiled coil. A helical transmembrane segment spans residues 105-125 (LLALTVPFFVFKIMYGKTPVY). At 126-181 (KLSSSTSTLFPTFVSGVWSQGWLYVLLHPLRTISQKWHIMEGKFGASKFDDMALQS) the chain is on the lumenal side. Residues 182 to 198 (VSLGIWVWALMNVINGV) form a helical membrane-spanning segment. The Cytoplasmic portion of the chain corresponds to 199–235 (EFIVKQLFLTPKMEAPASVETQEEKALDAVDDAIILD).

It belongs to the WRB/GET1 family. Component of the Golgi to ER traffic (GET) complex, which is composed of GET1, GET2 and GET3. Within the complex, GET1 and GET2 form a heterotetramer which is stabilized by phosphatidylinositol binding and which binds to the GET3 homodimer.

It localises to the endoplasmic reticulum membrane. Its subcellular location is the golgi apparatus membrane. Its function is as follows. Required for the post-translational delivery of tail-anchored (TA) proteins to the endoplasmic reticulum. Together with GET2, acts as a membrane receptor for soluble GET3, which recognizes and selectively binds the transmembrane domain of TA proteins in the cytosol. The GET complex cooperates with the HDEL receptor ERD2 to mediate the ATP-dependent retrieval of resident ER proteins that contain a C-terminal H-D-E-L retention signal from the Golgi to the ER. The chain is Golgi to ER traffic protein 1 from Saccharomyces cerevisiae (strain RM11-1a) (Baker's yeast).